The chain runs to 320 residues: Beta-ketoacyl-[acyl-carrier-protein] synthase III (320 aa).

Catalysis depends on residues cysteine 114 and histidine 247. The interval 248–252 is ACP-binding; the sequence is QANRR. Asparagine 277 is an active-site residue.

It belongs to the thiolase-like superfamily. FabH family. In terms of assembly, homodimer.

Its subcellular location is the cytoplasm. It catalyses the reaction malonyl-[ACP] + acetyl-CoA + H(+) = 3-oxobutanoyl-[ACP] + CO2 + CoA. It participates in lipid metabolism; fatty acid biosynthesis. Catalyzes the condensation reaction of fatty acid synthesis by the addition to an acyl acceptor of two carbons from malonyl-ACP. Catalyzes the first condensation reaction which initiates fatty acid synthesis and may therefore play a role in governing the total rate of fatty acid production. Possesses both acetoacetyl-ACP synthase and acetyl transacylase activities. Its substrate specificity determines the biosynthesis of branched-chain and/or straight-chain of fatty acids. The protein is Beta-ketoacyl-[acyl-carrier-protein] synthase III of Neisseria meningitidis serogroup A / serotype 4A (strain DSM 15465 / Z2491).